A 498-amino-acid polypeptide reads, in one-letter code: Dynein regulatory complex subunit 5 (498 aa).

Disordered stretches follow at residues Ala-27–Lys-52 and Met-200–Lys-223. Positions Leu-28–Gly-47 are enriched in low complexity. 6 LRR repeats span residues Cys-276 to Arg-299, Ala-306 to Lys-327, Arg-333 to Ala-353, Asn-361 to His-382, Cys-389 to Ser-409, and Thr-417 to Glu-438.

It belongs to the DRC5 family. In terms of assembly, component of the nexin-dynein regulatory complex (N-DRC). Interacts with DRC1. Interacts with FBXL13/DRC6, DRC3 and DRC7. In terms of tissue distribution, testis-specific (at protein level).

It is found in the cell projection. It localises to the cilium. The protein resides in the flagellum. The protein localises to the cytoplasm. Its subcellular location is the cytoskeleton. It is found in the flagellum axoneme. Its function is as follows. Component of the nexin-dynein regulatory complex (N-DRC) a key regulator of ciliary/flagellar motility which maintains the alignment and integrity of the distal axoneme and regulates microtubule sliding in motile axonemes. May play a role in the assembly of N-DRC. Required for sperm motility. In Mus musculus (Mouse), this protein is Dynein regulatory complex subunit 5 (Tcte1).